Reading from the N-terminus, the 255-residue chain is tRNA (guanine-N(1)-)-methyltransferase (255 aa).

S-adenosyl-L-methionine-binding positions include glycine 113 and 133–138 (IGDYVL).

Belongs to the RNA methyltransferase TrmD family. As to quaternary structure, homodimer.

It is found in the cytoplasm. The enzyme catalyses guanosine(37) in tRNA + S-adenosyl-L-methionine = N(1)-methylguanosine(37) in tRNA + S-adenosyl-L-homocysteine + H(+). Functionally, specifically methylates guanosine-37 in various tRNAs. This chain is tRNA (guanine-N(1)-)-methyltransferase, found in Mannheimia succiniciproducens (strain KCTC 0769BP / MBEL55E).